We begin with the raw amino-acid sequence, 179 residues long: Cell division protein ZapC (179 aa).

The protein belongs to the ZapC family. Interacts directly with FtsZ.

It localises to the cytoplasm. Functionally, contributes to the efficiency of the cell division process by stabilizing the polymeric form of the cell division protein FtsZ. Acts by promoting interactions between FtsZ protofilaments and suppressing the GTPase activity of FtsZ. This chain is Cell division protein ZapC, found in Aliivibrio salmonicida (strain LFI1238) (Vibrio salmonicida (strain LFI1238)).